The chain runs to 53 residues: Large ribosomal subunit protein bL32c (53 aa).

This sequence belongs to the bacterial ribosomal protein bL32 family.

The protein localises to the plastid. It is found in the chloroplast. The polypeptide is Large ribosomal subunit protein bL32c (Phaseolus vulgaris (Kidney bean)).